A 185-amino-acid polypeptide reads, in one-letter code: Prorelaxin (185 aa).

Residues 1–24 (MPRLFLFHLLGVCLLLNQFSRAVA) form the signal peptide. 3 cysteine pairs are disulfide-bonded: Cys-35-Cys-172, Cys-47-Cys-185, and Cys-171-Cys-176. A propeptide spans 56–157 (SLNQEDAPLK…LRSLGLDTHS (102 aa)) (connecting peptide).

The protein belongs to the insulin family. As to quaternary structure, heterodimer of a B chain and an A chain linked by two disulfide bonds.

It localises to the secreted. Functionally, relaxin is an ovarian hormone that acts with estrogen to produce dilatation of the birth canal in many mammals. May be involved in remodeling of connective tissues during pregnancy, promoting growth of pubic ligaments and ripening of the cervix. The chain is Prorelaxin (RLN) from Macaca mulatta (Rhesus macaque).